Reading from the N-terminus, the 270-residue chain is MLLASVPQLDRVAIQLGPFPVYWYGIIIGTGVLLGLWLATREGERLGIPKDTFVDLVLIAVPIAILFARMYYVIFEWEYYAQNPSQIINIRQGGLAIHGGLIGAVITGVLFAKRRGVSFWKLADIAAPSILLGQAIGRWGNFMNQEAHGDEVTRQFLEGLHLPDFIINQMYIEGVYYHPTFLYESLWNFAGVILLLALRKVNLRRGELFFTYLIWYSVGRFFVEGLRTDSLMLGPLRIAQVMSIGLVVISIIFIIVRRKMGQADKRYLEN.

4 helical membrane-spanning segments follow: residues 19 to 39, 56 to 76, 92 to 112, and 116 to 136; these read FPVYWYGIIIGTGVLLGLWLA, LVLIAVPIAILFARMYYVIFE, QGGLAIHGGLIGAVITGVLFA, and GVSFWKLADIAAPSILLGQAI. R138 serves as a coordination point for a 1,2-diacyl-sn-glycero-3-phospho-(1'-sn-glycerol). Transmembrane regions (helical) follow at residues 178–198, 206–226, and 236–256; these read HPTFLYESLWNFAGVILLLAL, GELFFTYLIWYSVGRFFVEGL, and LRIAQVMSIGLVVISIIFIIV.

It belongs to the Lgt family.

The protein localises to the cell membrane. The catalysed reaction is L-cysteinyl-[prolipoprotein] + a 1,2-diacyl-sn-glycero-3-phospho-(1'-sn-glycerol) = an S-1,2-diacyl-sn-glyceryl-L-cysteinyl-[prolipoprotein] + sn-glycerol 1-phosphate + H(+). Its pathway is protein modification; lipoprotein biosynthesis (diacylglyceryl transfer). Functionally, catalyzes the transfer of the diacylglyceryl group from phosphatidylglycerol to the sulfhydryl group of the N-terminal cysteine of a prolipoprotein, the first step in the formation of mature lipoproteins. In Bacillus cereus (strain B4264), this protein is Phosphatidylglycerol--prolipoprotein diacylglyceryl transferase.